A 446-amino-acid polypeptide reads, in one-letter code: Ribosomal protein uS12 methylthiotransferase RimO (446 aa).

Residues 7-118 enclose the MTTase N-terminal domain; that stretch reads PKIAFAHLGC…IVEVIERVER (112 aa). 6 residues coordinate [4Fe-4S] cluster: cysteine 16, cysteine 52, cysteine 81, cysteine 156, cysteine 160, and cysteine 163. One can recognise a Radical SAM core domain in the interval 142 to 371; sequence TTPAPVAYLR…MELQQPIAQR (230 aa). The 67-residue stretch at 374–440 folds into the TRAM domain; that stretch reads AAEVGKIVPV…IYDLYGIIPA (67 aa).

The protein belongs to the methylthiotransferase family. RimO subfamily. Requires [4Fe-4S] cluster as cofactor.

It is found in the cytoplasm. It carries out the reaction L-aspartate(89)-[ribosomal protein uS12]-hydrogen + (sulfur carrier)-SH + AH2 + 2 S-adenosyl-L-methionine = 3-methylsulfanyl-L-aspartate(89)-[ribosomal protein uS12]-hydrogen + (sulfur carrier)-H + 5'-deoxyadenosine + L-methionine + A + S-adenosyl-L-homocysteine + 2 H(+). In terms of biological role, catalyzes the methylthiolation of an aspartic acid residue of ribosomal protein uS12. The sequence is that of Ribosomal protein uS12 methylthiotransferase RimO from Thermosynechococcus vestitus (strain NIES-2133 / IAM M-273 / BP-1).